A 446-amino-acid polypeptide reads, in one-letter code: Peroxisomal biogenesis factor 3 (446 aa).

Over 1–12 (MARTGLQRHRGK) the chain is Peroxisomal. The chain crosses the membrane as a helical span at residues 13–33 (LLGTGAVLGGLVVAGVVAAVA). The Cytoplasmic segment spans residues 34–446 (AKRWVRRQQQ…SASVYSNFGV (413 aa)). The segment at 101-122 (RAGEDDEQGSGGHASAGEGSVS) is disordered.

It belongs to the peroxin-3 family.

The protein localises to the peroxisome membrane. Functionally, involved in peroxisome biosynthesis. In Eremothecium gossypii (strain ATCC 10895 / CBS 109.51 / FGSC 9923 / NRRL Y-1056) (Yeast), this protein is Peroxisomal biogenesis factor 3 (PEX3).